The primary structure comprises 793 residues: Probable phosphoketolase (793 aa).

It belongs to the XFP family. Requires thiamine diphosphate as cofactor.

The polypeptide is Probable phosphoketolase (Gloeobacter violaceus (strain ATCC 29082 / PCC 7421)).